Reading from the N-terminus, the 131-residue chain is UPF0251 protein MMP0619 (131 aa).

It belongs to the UPF0251 family.

This Methanococcus maripaludis (strain DSM 14266 / JCM 13030 / NBRC 101832 / S2 / LL) protein is UPF0251 protein MMP0619.